The following is a 414-amino-acid chain: Histidine--tRNA ligase (414 aa).

It belongs to the class-II aminoacyl-tRNA synthetase family. In terms of assembly, homodimer.

The protein resides in the cytoplasm. It catalyses the reaction tRNA(His) + L-histidine + ATP = L-histidyl-tRNA(His) + AMP + diphosphate + H(+). The chain is Histidine--tRNA ligase (hisS) from Mycoplasma pneumoniae (strain ATCC 29342 / M129 / Subtype 1) (Mycoplasmoides pneumoniae).